Reading from the N-terminus, the 638-residue chain is Exotoxin A (638 aa).

The signal sequence occupies residues 1–25 (MHLTPHWIPLVASLGLLAGGSFASA). Residues 26 to 277 (AEEAFDLWNE…VISHRLHFPE (252 aa)) form a domain Ia (required for target cell recognition) region. The interval 278–389 (GGSLAALTAH…TGNDEAGAAS (112 aa)) is II (required for translocation in target cell cytoplasm). A disulfide bridge connects residues cysteine 290 and cysteine 312. The tract at residues 390–429 (ADVVSLTCPVAAGECAGPADSGDALLERNYPTGAEFLGDG) is domain Ib. The segment at 430-638 (GDISFSTRGT…PGKPPREDLK (209 aa)) is III (required for ADP-ribosyl activity). NAD(+)-binding positions include 465–467 (HGT), serine 474, 479–485 (GVRARSQ), and glutamate 578. Glutamate 578 is an active-site residue. The segment at 596–638 (IPTDPRNVGGDLDPSSIPDKEQAISALPDYASQPGKPPREDLK) is disordered.

The 8 cysteines participate in intrachain disulfide bonds.

It catalyses the reaction diphthamide-[translation elongation factor 2] + NAD(+) = N-(ADP-D-ribosyl)diphthamide-[translation elongation factor 2] + nicotinamide + H(+). With respect to regulation, inhibited by 1,8-naphthalimide (NAP) as well as a number of poly(ADP-ribose) polymerase inhibitors and other compounds. An NAD-dependent ADP-ribosyltransferase (ADPRT). Catalyzes the transfer of the ADP ribosyl moiety of oxidized NAD (NAD(+)) onto eukaryotic elongation factor 2 (eEF-2) thus arresting protein synthesis. Has an LD(50) of 65 ng/ml against the human lung epithelial cell line C38. The chain is Exotoxin A from Pseudomonas aeruginosa (strain ATCC 15692 / DSM 22644 / CIP 104116 / JCM 14847 / LMG 12228 / 1C / PRS 101 / PAO1).